The following is a 299-amino-acid chain: Probable lipid kinase YegS (299 aa).

The DAGKc domain maps to 2 to 133; the sequence is AEFPASLLIL…IDMAQVNKQT (132 aa). ATP is bound by residues Thr-40, 66-72, and Thr-95; that span reads GDGTINE. Residues Leu-215, Asp-218, and Leu-220 each contribute to the Mg(2+) site. The Proton acceptor role is filled by Glu-271.

This sequence belongs to the diacylglycerol/lipid kinase family. YegS lipid kinase subfamily. Requires Mg(2+) as cofactor. It depends on Ca(2+) as a cofactor.

The protein resides in the cytoplasm. Its function is as follows. Probably phosphorylates lipids; the in vivo substrate is unknown. This Escherichia coli O9:H4 (strain HS) protein is Probable lipid kinase YegS.